A 271-amino-acid chain; its full sequence is Solute carrier family 66 member 2 (271 aa).

A run of 3 helical transmembrane segments spans residues 7 to 27 (GWLLVPLHQLVSWVAAGAMVF), 49 to 69 (FSTHVCLVLLVANILRILFWF), and 72 to 92 (HFESPLLWQSIVMILTMLLML). Positions 14-80 (HQLVSWVAAG…RHFESPLLWQ (67 aa)) constitute a PQ-loop 1 domain. Position 110 is a phosphoserine (S110). Transmembrane regions (helical) follow at residues 145–165 (DYVQCVLAFTGVAGYITYLSI), 168–188 (ALFVETLGFLAVLTEAMLGVP), and 232–252 (VCGLLQVMVDLVILGQAYAFA). In terms of domain architecture, PQ-loop 2 spans 178–233 (AVLTEAMLGVPQLYRNYCHRSTEGMSLKMVLMWTSGDTFKTAYFLLNGAPLQFSVC).

Its subcellular location is the membrane. This Mus musculus (Mouse) protein is Solute carrier family 66 member 2 (Slc66a2).